The sequence spans 1023 residues: 1-phosphatidylinositol 4,5-bisphosphate phosphodiesterase beta-4 (1023 aa).

In terms of domain architecture, PI-PLC X-box spans 149 to 299 (QEMDHPLAHY…LKRKILIKKQ (151 aa)). Active-site residues include histidine 164 and histidine 211. The 117-residue stretch at 413–529 (LSTMINYAQP…GYLLKPDFMR (117 aa)) folds into the PI-PLC Y-box domain. The region spanning 532 to 657 (DRTFDPFSET…SLRNEGNKPL (126 aa)) is the C2 domain. Disordered regions lie at residues 711–742 (ADVPSDTSKNDKKGKANTAKANVTPQSSSELR) and 930–958 (KISMENSKAISQDKSIKNKAERERRVREL). 2 stretches are compositionally biased toward polar residues: residues 729 to 742 (AKANVTPQSSSELR) and 933 to 942 (MENSKAISQD). Threonine 734 is modified (phosphothreonine). Positions 943-957 (KSIKNKAERERRVRE) are enriched in basic and acidic residues.

Ca(2+) serves as cofactor. Post-translationally, the N-terminus is blocked. In terms of tissue distribution, preferentially expressed in the retina.

The protein resides in the cell membrane. It carries out the reaction a 1,2-diacyl-sn-glycero-3-phospho-(1D-myo-inositol-4,5-bisphosphate) + H2O = 1D-myo-inositol 1,4,5-trisphosphate + a 1,2-diacyl-sn-glycerol + H(+). The enzyme catalyses a 1,2-diacyl-sn-glycero-3-phospho-(1D-myo-inositol) + H2O = 1D-myo-inositol 1-phosphate + a 1,2-diacyl-sn-glycerol + H(+). Functionally, activated phosphatidylinositol-specific phospholipase C enzymes catalyze the production of the second messenger molecules diacylglycerol (DAG) and inositol 1,4,5-trisphosphate (IP3) involved in G-protein coupled receptor signaling pathways. PLCB4 is a direct effector of the endothelin receptor signaling pathway that plays an essential role in lower jaw and middle ear structures development. The sequence is that of 1-phosphatidylinositol 4,5-bisphosphate phosphodiesterase beta-4 (PLCB4) from Bos taurus (Bovine).